The primary structure comprises 415 residues: MTELIKKGIAAREASSFLAQATTKQKNTALINLSNDLIANTATLLKENEKDIIRAKEKKTPDTMIDRLRLTEERIKEISEAVKQVVTLKDPIGEVTTMWKNEAELTIGKIRVPLGVIGIIYESRPNVTVDASILCFKTGNAVILRGGSDAIDSNKALMNVIQESLEKSGFPRTSVQLIEDTSRETAREMMRLNRFLDVLIPRGGAKLIQTVLENATVPVIETGTGNCHIYVDKAAEKQMAIDILVNAKCSRPSVCNSAETLLIHESVAEDFLPAMEMALKEYNVELRADKRAREILKDAKAATESDWEEEFLDFILAIKVVDSVEEAINHINKYGTKHSEAIISNDYATGQAFHQKVDAAAVYINASTRFTDGFAMGFGAEIGISTQKLHARGPMGLTELTSTKYIIFGDGQIRN.

The protein belongs to the gamma-glutamyl phosphate reductase family.

The protein localises to the cytoplasm. It catalyses the reaction L-glutamate 5-semialdehyde + phosphate + NADP(+) = L-glutamyl 5-phosphate + NADPH + H(+). The protein operates within amino-acid biosynthesis; L-proline biosynthesis; L-glutamate 5-semialdehyde from L-glutamate: step 2/2. Functionally, catalyzes the NADPH-dependent reduction of L-glutamate 5-phosphate into L-glutamate 5-semialdehyde and phosphate. The product spontaneously undergoes cyclization to form 1-pyrroline-5-carboxylate. The polypeptide is Gamma-glutamyl phosphate reductase (Listeria welshimeri serovar 6b (strain ATCC 35897 / DSM 20650 / CCUG 15529 / CIP 8149 / NCTC 11857 / SLCC 5334 / V8)).